The sequence spans 267 residues: Probable proteasome subunit beta type-2 (267 aa).

A propeptide spans 1–35 (removed in mature form); it reads MMGINERKGFDFEYYQRNLLLQEKGFPTPKATSTG. The active-site Nucleophile is T36.

It belongs to the peptidase T1B family. In terms of assembly, the 26S proteasome consists of a 20S proteasome core and two 19S regulatory subunits. The 20S proteasome core is composed of 28 subunits that are arranged in four stacked rings, resulting in a barrel-shaped structure. The two end rings are each formed by seven alpha subunits, and the two central rings are each formed by seven beta subunits. The catalytic chamber with the active sites is on the inside of the barrel.

The protein localises to the cytoplasm. The protein resides in the nucleus. The enzyme catalyses Cleavage of peptide bonds with very broad specificity.. The proteasome is a multicatalytic proteinase complex which is characterized by its ability to cleave peptides with Arg, Phe, Tyr, Leu, and Glu adjacent to the leaving group at neutral or slightly basic pH. The proteasome has an ATP-dependent proteolytic activity (Potential). This is Probable proteasome subunit beta type-2 (pup1) from Schizosaccharomyces pombe (strain 972 / ATCC 24843) (Fission yeast).